The chain runs to 160 residues: 2-C-methyl-D-erythritol 2,4-cyclodiphosphate synthase (160 aa).

Positions 11 and 13 each coordinate a divalent metal cation. 4-CDP-2-C-methyl-D-erythritol 2-phosphate contacts are provided by residues 11–13 (DVH) and 37–38 (HS). An a divalent metal cation-binding site is contributed by histidine 45. 4-CDP-2-C-methyl-D-erythritol 2-phosphate-binding positions include 59 to 61 (DIG) and arginine 145.

Belongs to the IspF family. Homotrimer. The cofactor is a divalent metal cation.

The catalysed reaction is 4-CDP-2-C-methyl-D-erythritol 2-phosphate = 2-C-methyl-D-erythritol 2,4-cyclic diphosphate + CMP. Its pathway is isoprenoid biosynthesis; isopentenyl diphosphate biosynthesis via DXP pathway; isopentenyl diphosphate from 1-deoxy-D-xylulose 5-phosphate: step 4/6. Involved in the biosynthesis of isopentenyl diphosphate (IPP) and dimethylallyl diphosphate (DMAPP), two major building blocks of isoprenoid compounds. Catalyzes the conversion of 4-diphosphocytidyl-2-C-methyl-D-erythritol 2-phosphate (CDP-ME2P) to 2-C-methyl-D-erythritol 2,4-cyclodiphosphate (ME-CPP) with a corresponding release of cytidine 5-monophosphate (CMP). This Neisseria meningitidis serogroup B (strain ATCC BAA-335 / MC58) protein is 2-C-methyl-D-erythritol 2,4-cyclodiphosphate synthase.